Consider the following 129-residue polypeptide: Ribulose bisphosphate carboxylase small subunit (129 aa).

A disordered region spans residues 109 to 129; it reads LRMTRTESNGRSQHYMWETQR.

Belongs to the RuBisCO small chain family. In terms of assembly, heterohexadecamer of 8 large and 8 small subunits.

Its function is as follows. RuBisCO catalyzes two reactions: the carboxylation of D-ribulose 1,5-bisphosphate, the primary event in carbon dioxide fixation, as well as the oxidative fragmentation of the pentose substrate. Both reactions occur simultaneously and in competition at the same active site. Although the small subunit is not catalytic it is essential for maximal activity. This chain is Ribulose bisphosphate carboxylase small subunit, found in Rhizobium meliloti (strain 1021) (Ensifer meliloti).